The sequence spans 283 residues: UPF0276 protein Anae109_1558 (283 aa).

The protein belongs to the UPF0276 family.

This is UPF0276 protein Anae109_1558 from Anaeromyxobacter sp. (strain Fw109-5).